Reading from the N-terminus, the 98-residue chain is Cystatin-B (98 aa).

Methionine 1 is modified (N-acetylmethionine). The short motif at 46–50 (QIVAG) is the Secondary area of contact element.

Belongs to the cystatin family. Widely expressed. Highest expression in heart, liver and kidney. Lower levels in brain, lung and skeletal muscle. Lowest levels in spleen and testis.

The protein localises to the cytoplasm. In terms of biological role, this is an intracellular thiol proteinase inhibitor. In Mus musculus (Mouse), this protein is Cystatin-B (Cstb).